The sequence spans 427 residues: Acetylornithine aminotransferase (427 aa).

A disordered region spans residues 1-23; the sequence is MSLQTLIEQATNPPESGSAASSP. Residues 124–125 and Phe-157 contribute to the pyridoxal 5'-phosphate site; that span reads GA. Position 160 (Arg-160) interacts with N(2)-acetyl-L-ornithine. 248–251 lines the pyridoxal 5'-phosphate pocket; sequence DEVQ. At Lys-277 the chain carries N6-(pyridoxal phosphate)lysine. A N(2)-acetyl-L-ornithine-binding site is contributed by Ser-304. Residue Thr-305 coordinates pyridoxal 5'-phosphate.

It belongs to the class-III pyridoxal-phosphate-dependent aminotransferase family. ArgD subfamily. As to quaternary structure, homodimer. Requires pyridoxal 5'-phosphate as cofactor.

The protein localises to the cytoplasm. It carries out the reaction N(2)-acetyl-L-ornithine + 2-oxoglutarate = N-acetyl-L-glutamate 5-semialdehyde + L-glutamate. It participates in amino-acid biosynthesis; L-arginine biosynthesis; N(2)-acetyl-L-ornithine from L-glutamate: step 4/4. In Nostoc sp. (strain PCC 7120 / SAG 25.82 / UTEX 2576), this protein is Acetylornithine aminotransferase.